The primary structure comprises 81 residues: Large ribosomal subunit protein bL31B (81 aa).

This sequence belongs to the bacterial ribosomal protein bL31 family. Type B subfamily. As to quaternary structure, part of the 50S ribosomal subunit.

This Bacillus anthracis (strain A0248) protein is Large ribosomal subunit protein bL31B.